A 243-amino-acid polypeptide reads, in one-letter code: Large ribosomal subunit protein uL3 (243 aa).

Disordered regions lie at residues 139 to 164 and 218 to 243; these read VSHR…KMPG and KPGK…QEGV. Position 151 is an N5-methylglutamine (Q151). Low complexity predominate over residues 231 to 243; the sequence is QTAAAPAAEQEGV.

Belongs to the universal ribosomal protein uL3 family. As to quaternary structure, part of the 50S ribosomal subunit. Forms a cluster with proteins L14 and L19. In terms of processing, methylated by PrmB.

In terms of biological role, one of the primary rRNA binding proteins, it binds directly near the 3'-end of the 23S rRNA, where it nucleates assembly of the 50S subunit. The polypeptide is Large ribosomal subunit protein uL3 (Rhodopseudomonas palustris (strain BisB18)).